A 165-amino-acid polypeptide reads, in one-letter code: Transcription elongation factor GreA (165 aa).

A coiled-coil region spans residues 55 to 78 (AAKEEQGKQELRVRQLTQLLESAK).

Belongs to the GreA/GreB family.

In terms of biological role, necessary for efficient RNA polymerase transcription elongation past template-encoded arresting sites. The arresting sites in DNA have the property of trapping a certain fraction of elongating RNA polymerases that pass through, resulting in locked ternary complexes. Cleavage of the nascent transcript by cleavage factors such as GreA or GreB allows the resumption of elongation from the new 3'terminus. GreA releases sequences of 2 to 3 nucleotides. The chain is Transcription elongation factor GreA from Streptomyces coelicolor (strain ATCC BAA-471 / A3(2) / M145).